The following is an 84-amino-acid chain: Large ribosomal subunit protein bL27 (84 aa).

Residues 1–22 are disordered; it reads MAHKKGGGSTKNGRDSNPKYLG.

It belongs to the bacterial ribosomal protein bL27 family.

The chain is Large ribosomal subunit protein bL27 from Prosthecochloris aestuarii (strain DSM 271 / SK 413).